The chain runs to 333 residues: Heat shock transcription factor, X-linked member 3 (333 aa).

Residues 1–66 (MASQNTEQEY…QDNSPPEDRN (66 aa)) form a disordered region. Over residues 29 to 39 (GSSPDPNPDSS) the composition is skewed to low complexity. Positions 49-60 (AMSQDPGSQDNS) are enriched in polar residues. A DNA-binding region spans residues 79–182 (FRLSFPRKLW…PRLLENIQRK (104 aa)). The disordered stretch occupies residues 227 to 275 (QGAPSVQGPSGTQSFRRSGMWSKKSATRHPLGNGPPQEPNGPSWEGTSG). The span at 228–242 (GAPSVQGPSGTQSFR) shows a compositional bias: polar residues.

Belongs to the HSF family.

It is found in the nucleus. In Homo sapiens (Human), this protein is Heat shock transcription factor, X-linked member 3.